The chain runs to 517 residues: MHGGQGPLLLLLLLAVCLGAQGRNQEERLLADLMQNYDPNLRPAERDSDVVNVSLKLTLTNLISLNEREEALTTNVWIEMQWCDYRLRWDPRDYEGLWVLRVPSTMVWRPDIVLENNVDGVFEVALYCNVLVSPDGCIYWLPPAIFRSACSISVTYFPFDWQNCSLIFQSQTYSTNEIDLQLSQEDGQTIEWIFIDPEAFTENGEWAIQHRPAKMLLDPAAPAQEAGHQKVVFYLLIQRKPLFYVINIIAPCVLISSVAILIHFLPAKAGGQKCTVAINVLLAQTVFLFLVAKKVPETSQAVPLISKYLTFLLVVTILIVVNAVVVLNVSLRSPHTHSMARGVRKVFLRLLPQLLRMHVRPLAPAAVQDTQSRLQNGSSGWSITTGEEVALCLPRSELLFQQWQRQGLVAAALEKLEKGPELGLSQFCGSLKQAAPAIQACVEACNLIACARHQQSHFDNGNEEWFLVGRVLDRVCFLAMLSLFICGTAGIFLMAHYNRVPALPFPGDPRPYLPSPD.

An N-terminal signal peptide occupies residues 1 to 22 (MHGGQGPLLLLLLLAVCLGAQG). Over 23–240 (RNQEERLLAD…VVFYLLIQRK (218 aa)) the chain is Extracellular. 2 N-linked (GlcNAc...) asparagine glycosylation sites follow: Asn52 and Asn163. Cys150 and Cys164 are oxidised to a cystine. Transmembrane regions (helical) follow at residues 241-265 (PLFY…IHFL), 275-293 (TVAI…LVAK), and 309-330 (LTFL…LNVS). Residues 331–474 (LRSPHTHSMA…WFLVGRVLDR (144 aa)) lie on the Cytoplasmic side of the membrane. A helical membrane pass occupies residues 475–495 (VCFLAMLSLFICGTAGIFLMA).

This sequence belongs to the ligand-gated ion channel (TC 1.A.9) family. Acetylcholine receptor (TC 1.A.9.1) subfamily. Gamma/CHRNG sub-subfamily. In terms of assembly, pentamer of two alpha chains, and one each of the beta, delta, and gamma (in immature muscle) or epsilon (in mature muscle) chains.

The protein localises to the postsynaptic cell membrane. It is found in the cell membrane. The enzyme catalyses K(+)(in) = K(+)(out). It catalyses the reaction Na(+)(in) = Na(+)(out). After binding acetylcholine, the AChR responds by an extensive change in conformation that affects all subunits and leads to opening of an ion-conducting channel across the plasma membrane. This chain is Acetylcholine receptor subunit gamma, found in Homo sapiens (Human).